Consider the following 417-residue polypeptide: Carboxypeptidase A2 (417 aa).

The first 16 residues, 1–16, serve as a signal peptide directing secretion; sequence MRLTLLLAALLGYIYC. A propeptide spans 17-112 (activation peptide); it reads QETFVGDQVL…EMLFNQQRER (96 aa). A Peptidase M14 domain is found at 120-412; it reads AYHTLEEIYQ…LGLKTIMEHV (293 aa). Residues His-177 and Glu-180 each contribute to the Zn(2+) site. Substrate-binding positions include 177–180, Arg-235, and 252–253; these read HARE and NR. An intrachain disulfide couples Cys-246 to Cys-269. Residue His-304 participates in Zn(2+) binding. 305–306 serves as a coordination point for substrate; that stretch reads SY. Cys-318 and Cys-352 are oxidised to a cystine. Tyr-356 provides a ligand contact to substrate. Glu-378 functions as the Proton donor/acceptor in the catalytic mechanism.

It belongs to the peptidase M14 family. Requires Zn(2+) as cofactor.

The protein resides in the secreted. It catalyses the reaction Similar to that of carboxypeptidase A (EC 3.4.17.1), but with a preference for bulkier C-terminal residues.. In terms of biological role, carboxypeptidase that catalyzes the release of a C-terminal amino acid, with a preference for large aromatic C-terminal residues. This Rattus norvegicus (Rat) protein is Carboxypeptidase A2 (Cpa2).